Reading from the N-terminus, the 868-residue chain is DNA mismatch repair protein MutS (868 aa).

620-627 (GPNMGGKS) is a binding site for ATP.

The protein belongs to the DNA mismatch repair MutS family.

Functionally, this protein is involved in the repair of mismatches in DNA. It is possible that it carries out the mismatch recognition step. This protein has a weak ATPase activity. The protein is DNA mismatch repair protein MutS of Xylella fastidiosa (strain Temecula1 / ATCC 700964).